Consider the following 438-residue polypeptide: Mannan endo-1,4-beta-mannosidase F (438 aa).

A signal peptide spans 1–17 (MHPLPSVALLSAIGAVA). The CBM1 domain maps to 19–54 (QVGPWGQCGGRSYTGETSCVSGWSCVLFNEWYSQCQ). A ser-rich linker region spans residues 60–96 (STSSVSATAAPSSTSSSKESVPSATTSKKPVPTGSSS). Residues 61–86 (TSSVSATAAPSSTSSSKESVPSATTS) show a composition bias toward low complexity. Residues 61–92 (TSSVSATAAPSSTSSSKESVPSATTSKKPVPT) form a disordered region. The tract at residues 97–438 (FVKADGLKFN…CGVADHLSTL (342 aa)) is catalytic. Residues tryptophan 149 and asparagine 263 each contribute to the substrate site. Glutamate 264 serves as the catalytic Proton donor. N-linked (GlcNAc...) asparagine glycosylation occurs at asparagine 277. Tyrosine 339 provides a ligand contact to substrate. The active-site Nucleophile is the glutamate 373. Position 402 (tryptophan 402) interacts with substrate.

Belongs to the glycosyl hydrolase 5 (cellulase A) family.

It localises to the secreted. The catalysed reaction is Random hydrolysis of (1-&gt;4)-beta-D-mannosidic linkages in mannans, galactomannans and glucomannans.. In terms of biological role, endo-1,4-mannanase, a crucial enzyme for depolymerization of seed galactomannans and wood galactoglucomannans. The polypeptide is Mannan endo-1,4-beta-mannosidase F (manF) (Aspergillus fumigatus (strain ATCC MYA-4609 / CBS 101355 / FGSC A1100 / Af293) (Neosartorya fumigata)).